We begin with the raw amino-acid sequence, 396 residues long: L-lactate dehydrogenase (396 aa).

Residues methionine 1 to glycine 380 enclose the FMN hydroxy acid dehydrogenase domain. Substrate is bound at residue tyrosine 24. Residues serine 106 and glutamine 127 each coordinate FMN. Residue tyrosine 129 coordinates substrate. Residue threonine 155 participates in FMN binding. Arginine 164 provides a ligand contact to substrate. Position 251 (lysine 251) interacts with FMN. Histidine 275 acts as the Proton acceptor in catalysis. Position 278 (arginine 278) interacts with substrate. An FMN-binding site is contributed by aspartate 306–arginine 330.

This sequence belongs to the FMN-dependent alpha-hydroxy acid dehydrogenase family. Requires FMN as cofactor.

The protein localises to the cell inner membrane. The catalysed reaction is (S)-lactate + A = pyruvate + AH2. Catalyzes the conversion of L-lactate to pyruvate. Is coupled to the respiratory chain. This Salmonella paratyphi A (strain ATCC 9150 / SARB42) protein is L-lactate dehydrogenase.